The following is an 876-amino-acid chain: Probable inactive ATP-dependent zinc metalloprotease FTSHI 2, chloroplastic (876 aa).

The disordered stretch occupies residues 1-20; the sequence is MACRFPLHSSSPSQFLSPEN. The transit peptide at 1–32 directs the protein to the chloroplast; that stretch reads MACRFPLHSSSPSQFLSPENRQRLPRNYPSIS. Residues 8–19 show a composition bias toward polar residues; sequence HSSSPSQFLSPE. Residues 59–79 traverse the membrane as a helical segment; it reads LLAIPITLTIISASLAKPSFA. The segment at 256-276 is disordered; the sequence is TMKAQKKQQERKKRKAVRKKK. The span at 258 to 275 shows a compositional bias: basic residues; sequence KAQKKQQERKKRKAVRKK. Residues 304-324 traverse the membrane as a helical segment; sequence VATALGLVFFYIFYRVVVLNY. The disordered stretch occupies residues 350-370; the sequence is ELEREMEGIEEEDEEVEEGTG. The segment covering 357–368 has biased composition (acidic residues); it reads GIEEEDEEVEEG. 450–457 is an ATP binding site; it reads GPPGVGKT.

This sequence in the N-terminal section; belongs to the AAA ATPase family. In the C-terminal section; belongs to the peptidase M41 family. In terms of assembly, homooligomer. Interacts with FtsHi4.

It localises to the plastid. Its subcellular location is the chloroplast membrane. In terms of biological role, required for plastid development during embryogenesis. Might be involved in chaperone functions or play a structural role in the thylakoid FtsH complex. This is Probable inactive ATP-dependent zinc metalloprotease FTSHI 2, chloroplastic from Arabidopsis thaliana (Mouse-ear cress).